We begin with the raw amino-acid sequence, 185 residues long: Elongation factor P (185 aa).

It belongs to the elongation factor P family.

It is found in the cytoplasm. It functions in the pathway protein biosynthesis; polypeptide chain elongation. Functionally, involved in peptide bond synthesis. Stimulates efficient translation and peptide-bond synthesis on native or reconstituted 70S ribosomes in vitro. Probably functions indirectly by altering the affinity of the ribosome for aminoacyl-tRNA, thus increasing their reactivity as acceptors for peptidyl transferase. In Finegoldia magna (strain ATCC 29328 / DSM 20472 / WAL 2508) (Peptostreptococcus magnus), this protein is Elongation factor P.